The chain runs to 238 residues: Polynucleotide 3'-phosphatase (238 aa).

Belongs to the DNA 3' phosphatase family.

Its subcellular location is the nucleus. It carries out the reaction a 3'end (2'-deoxyribonucleotide 3'-phosphate)-DNA + H2O = a 3'-end 2'-deoxyribonucleotide-DNA + phosphate. Functionally, dephosphorylate DNA's 3'-phosphate termini. Has a role in the repair of breaks in single-stranded DNA. In Saccharomyces cerevisiae (strain ATCC 204508 / S288c) (Baker's yeast), this protein is Polynucleotide 3'-phosphatase (TPP1).